A 464-amino-acid chain; its full sequence is L-cystine uptake protein TcyP (464 aa).

10 helical membrane passes run Thr3–Met23, Val34–Pro54, Tyr73–Phe93, Gly107–Ala127, Pro184–Val204, Ile225–Met245, Phe263–Ala283, Ala347–Leu367, Phe371–Gly391, and Phe395–Ile415.

It belongs to the dicarboxylate/amino acid:cation symporter (DAACS) (TC 2.A.23) family.

Its subcellular location is the membrane. In terms of biological role, mediates uptake of L-cystine, the oxidized form of L-cysteine. The chain is L-cystine uptake protein TcyP from Bacillus thuringiensis subsp. konkukian (strain 97-27).